Here is a 74-residue protein sequence, read N- to C-terminus: Delta-stichotoxin-Sgt2a (74 aa).

The first 19 residues, 1 to 19 (MNRLIILVFAAVFLTLASA), serve as a signal peptide directing secretion. The propeptide occupies 20–28 (EVSEDVNMA). 3 disulfides stabilise this stretch: Cys34–Cys71, Cys36–Cys64, and Cys57–Cys72.

It belongs to the sea anemone sodium channel inhibitory toxin family. Type I subfamily.

It localises to the secreted. The protein localises to the nematocyst. Its function is as follows. Binds specifically to voltage-gated sodium channels (Nav), thereby delaying their inactivation during signal transduction. The sequence is that of Delta-stichotoxin-Sgt2a from Stichodactyla gigantea (Giant carpet anemone).